The sequence spans 392 residues: DNA-directed RNA polymerase subunit Rpo1C (392 aa).

This sequence belongs to the RNA polymerase beta' chain family. Part of the RNA polymerase complex.

It localises to the cytoplasm. It catalyses the reaction RNA(n) + a ribonucleoside 5'-triphosphate = RNA(n+1) + diphosphate. Its function is as follows. DNA-dependent RNA polymerase (RNAP) catalyzes the transcription of DNA into RNA using the four ribonucleoside triphosphates as substrates. Forms part of the jaw domain. The chain is DNA-directed RNA polymerase subunit Rpo1C from Saccharolobus islandicus (strain Y.N.15.51 / Yellowstone #2) (Sulfolobus islandicus).